The primary structure comprises 418 residues: MQIMVLGGGVIGVTTAYYLAEAGHEVTVLDRQKGPALETSFANAGEISPGYASPWAGPGIPLKAIKWLLMKHGPLVVRPAFDPHMWTWLVKMLRNCTTERYAINKSRMVPLAEYSRDTLKALREATGITYDERTQGTLQLFRTQKQLDGTGGDVEVLKKYGVSYEILDQDGCIAAEPALGGVREKFVGGLRLPHDETGDCKMFTEKLAELCVARGVKFEYDTTIWRVLRSRNRVANLSTSKGFKASEAYVMALGSYSAGFMRRMKRSIPVYPVKGYSITVPIKDADVAPVSTVMDETYKVAITRLGDRIRVGGTAEISGFDLRLHESRRRTLEHSVGDLFPGAGAMREATFWCGLRPMTPDGPPLIGRTELSNLFLNTGHGTLGWTMACGSAKVLADIMSNKVPEIDARALAQERYLK.

FAD is bound at residue Ile3 to Tyr17.

It belongs to the DadA oxidoreductase family. Requires FAD as cofactor.

The enzyme catalyses a D-alpha-amino acid + A + H2O = a 2-oxocarboxylate + AH2 + NH4(+). It participates in amino-acid degradation; D-alanine degradation; NH(3) and pyruvate from D-alanine: step 1/1. Its function is as follows. Oxidative deamination of D-amino acids. In Mesorhizobium japonicum (strain LMG 29417 / CECT 9101 / MAFF 303099) (Mesorhizobium loti (strain MAFF 303099)), this protein is D-amino acid dehydrogenase 1 (dadA1).